A 98-amino-acid chain; its full sequence is Cystatin-B (98 aa).

N-acetylmethionine is present on M1. Positions 46–50 match the Secondary area of contact motif; it reads QVVAG.

This sequence belongs to the cystatin family. In terms of assembly, able to form dimers stabilized by noncovalent forces.

Its subcellular location is the cytoplasm. It is found in the nucleus. Functionally, this is an intracellular thiol proteinase inhibitor. Tightly binding reversible inhibitor of cathepsins L, H and B. The polypeptide is Cystatin-B (CSTB) (Pongo pygmaeus (Bornean orangutan)).